A 296-amino-acid polypeptide reads, in one-letter code: 4-hydroxybenzoate octaprenyltransferase (296 aa).

Transmembrane regions (helical) follow at residues 29–49, 52–72, 102–122, 146–166, 169–189, 219–239, 241–261, and 275–295; these read IGVY…GKGA, LQTV…GCVI, ALVL…FTNA, YYPQ…AFTA, GELP…TVGY, VIIL…GARF, LGAC…WEFW, and FLHN…DYAV.

This sequence belongs to the UbiA prenyltransferase family. Requires Mg(2+) as cofactor.

It is found in the cell inner membrane. It carries out the reaction all-trans-octaprenyl diphosphate + 4-hydroxybenzoate = 4-hydroxy-3-(all-trans-octaprenyl)benzoate + diphosphate. The protein operates within cofactor biosynthesis; ubiquinone biosynthesis. Functionally, catalyzes the prenylation of para-hydroxybenzoate (PHB) with an all-trans polyprenyl group. Mediates the second step in the final reaction sequence of ubiquinone-8 (UQ-8) biosynthesis, which is the condensation of the polyisoprenoid side chain with PHB, generating the first membrane-bound Q intermediate 3-octaprenyl-4-hydroxybenzoate. The polypeptide is 4-hydroxybenzoate octaprenyltransferase (Pseudomonas syringae pv. syringae (strain B728a)).